Reading from the N-terminus, the 1651-residue chain is Vitellogenin-6 (1651 aa).

An N-terminal signal peptide occupies residues M1–A15. Positions F34–M716 constitute a Vitellogenin domain. N252 and N1288 each carry an N-linked (GlcNAc...) asparagine glycan. The VWFD domain occupies A1340–N1515. Intrachain disulfides connect C1342-C1479 and C1364-C1514. Positions F1527–T1556 are disordered.

As to expression, synthesized in Caenorhabditis only by 32 cells building the intestine of adult hermaphroditic individuals; they are cotranslationally secreted into the body cavity and subsequently taken up by the gonad.

The protein resides in the secreted. Functionally, precursor of the egg-yolk proteins that are sources of nutrients during embryonic development. May play a role in cholesterol uptake. May be involved in thermotolerance. This chain is Vitellogenin-6 (vit-6), found in Caenorhabditis elegans.